Reading from the N-terminus, the 502-residue chain is Beta-amyrin 28-monooxygenase CYP716A379 (502 aa).

Residues 3–23 (LITLLSALLVLAIVSLSTFFV) form a helical; Signal-anchor for type II membrane protein membrane-spanning segment. Asn88 and Asn181 each carry an N-linked (GlcNAc...) asparagine glycan. Cys444 is a heme binding site.

Belongs to the cytochrome P450 family. Requires heme as cofactor. Mainly expressed in flowers and flower buds, to a lesser extent in young leaves and, at low levels, in old leaves, stems and roots.

The protein resides in the membrane. It carries out the reaction beta-amyrin + 3 reduced [NADPH--hemoprotein reductase] + 3 O2 = oleanolate + 3 oxidized [NADPH--hemoprotein reductase] + 4 H2O + 4 H(+). The protein operates within secondary metabolite biosynthesis; terpenoid biosynthesis. Its function is as follows. Component of the oleanane-type triterpene saponins (e.g. saponarioside A and saponarioside B) biosynthetic pathway, leading to the production of natural products with detergent properties used as traditional sources of soap. An oxidoreductase that facilitates the oxidation of the methyl group to a carboxyl group at the C-28 position of beta-amyrin, resulting in the formation of oleanolic acid. Catalyzes also the subsequent oxidation of the methyl group to a&lt; carboxyl group at the C-16 alpha position of oleanolic acid, resulting in the formation of echinocystic acid. The sequence is that of Beta-amyrin 28-monooxygenase CYP716A379 from Saponaria officinalis (Common soapwort).